Reading from the N-terminus, the 109-residue chain is Keratin, type II microfibrillar (109 aa).

Residues 1-10 are linker 1; sequence QNRQCCESNL. Residues 1 to 109 form the IF rod domain; sequence QNRQCCESNL…RLYEEEIRVL (109 aa). The interval 11–109 is coil 1B; sequence EPLFSGYIET…RLYEEEIRVL (99 aa).

Belongs to the intermediate filament family.

In terms of biological role, wool microfibrillar keratin. The polypeptide is Keratin, type II microfibrillar (Ovis aries (Sheep)).